The following is a 142-amino-acid chain: Endoribonuclease YbeY (142 aa).

Zn(2+) is bound by residues H107, H111, and D117.

Belongs to the endoribonuclease YbeY family. Requires Zn(2+) as cofactor.

The protein localises to the cytoplasm. Single strand-specific metallo-endoribonuclease involved in late-stage 70S ribosome quality control and in maturation of the 3' terminus of the 16S rRNA. The chain is Endoribonuclease YbeY from Chlorobium phaeobacteroides (strain DSM 266 / SMG 266 / 2430).